The sequence spans 499 residues: Protein phosphatase PP2A 55 kDa regulatory subunit (499 aa).

The interval 1–30 (MGRWGRQSPVLEPPDPQMQTTPPPPTLPPR) is disordered. A compositionally biased stretch (pro residues) spans 11–28 (LEPPDPQMQTTPPPPTLP). WD repeat units lie at residues 79–118 (TDAD…KAAN), 144–185 (EIEE…KSFG), 228–266 (AHTY…QSYN), 277–317 (ELTE…LCDR), 336–374 (EIIS…KPIE), 391–432 (ENDC…DVTL), and 467–498 (DFNK…FQDK).

Belongs to the phosphatase 2A regulatory subunit B family. PP2A exists in several trimeric forms, all of which consist of a core composed of a catalytic subunit associated with a 65 kDa regulatory subunit (PR65) (subunit A). The core complex associates with a third, variable subunit (subunit B), which confers distinct properties to the holoenzyme.

Its function is as follows. Could perform a substrate recognition function or could be responsible for targeting the enzyme complex to the appropriate subcellular compartment. This chain is Protein phosphatase PP2A 55 kDa regulatory subunit (tws), found in Drosophila melanogaster (Fruit fly).